The sequence spans 1574 residues: DNA-directed RNA polymerase subunit beta' (1574 aa).

Zn(2+) contacts are provided by Cys64, Cys66, Cys79, and Cys82. The Mg(2+) site is built by Asp590, Asp592, and Asp594. 4 residues coordinate Zn(2+): Cys928, Cys1002, Cys1009, and Cys1012.

It belongs to the RNA polymerase beta' chain family. In terms of assembly, the RNAP catalytic core consists of 2 alpha, 1 beta, 1 beta' and 1 omega subunit. When a sigma factor is associated with the core the holoenzyme is formed, which can initiate transcription. Requires Mg(2+) as cofactor. It depends on Zn(2+) as a cofactor.

It catalyses the reaction RNA(n) + a ribonucleoside 5'-triphosphate = RNA(n+1) + diphosphate. Functionally, DNA-dependent RNA polymerase catalyzes the transcription of DNA into RNA using the four ribonucleoside triphosphates as substrates. The sequence is that of DNA-directed RNA polymerase subunit beta' from Aquifex aeolicus (strain VF5).